The chain runs to 414 residues: Serine/threonine transporter SstT (414 aa).

The next 8 membrane-spanning stretches (helical) occupy residues 22–42, 54–74, 89–109, 148–168, 189–209, 223–243, 305–325, and 337–357; these read GLVL…TIGF, IFVK…VMAA, IIVL…IAGF, AIFK…GLAL, IVHV…AETL, LLAV…PILV, MAGA…TLGL, and IVAA…LLLI.

It belongs to the dicarboxylate/amino acid:cation symporter (DAACS) (TC 2.A.23) family.

It is found in the cell inner membrane. The catalysed reaction is L-serine(in) + Na(+)(in) = L-serine(out) + Na(+)(out). It carries out the reaction L-threonine(in) + Na(+)(in) = L-threonine(out) + Na(+)(out). Functionally, involved in the import of serine and threonine into the cell, with the concomitant import of sodium (symport system). The polypeptide is Serine/threonine transporter SstT (Haemophilus influenzae (strain 86-028NP)).